The primary structure comprises 429 residues: Adenylosuccinate synthetase (429 aa).

Residues 12-18 (GDEGKGK) and 40-42 (GHT) each bind GTP. The active-site Proton acceptor is D13. 2 residues coordinate Mg(2+): D13 and G40. Residues 13 to 16 (DEGK), 38 to 41 (NAGH), T129, R143, Q223, T238, and R302 each bind IMP. H41 functions as the Proton donor in the catalytic mechanism. 298–304 (VVTGRKR) serves as a coordination point for substrate. Residues R304, 330-332 (KLD), and 412-414 (STS) contribute to the GTP site.

This sequence belongs to the adenylosuccinate synthetase family. Homodimer. Mg(2+) is required as a cofactor.

The protein resides in the cytoplasm. It catalyses the reaction IMP + L-aspartate + GTP = N(6)-(1,2-dicarboxyethyl)-AMP + GDP + phosphate + 2 H(+). The protein operates within purine metabolism; AMP biosynthesis via de novo pathway; AMP from IMP: step 1/2. Functionally, plays an important role in the de novo pathway of purine nucleotide biosynthesis. Catalyzes the first committed step in the biosynthesis of AMP from IMP. This Bartonella henselae (strain ATCC 49882 / DSM 28221 / CCUG 30454 / Houston 1) (Rochalimaea henselae) protein is Adenylosuccinate synthetase.